The sequence spans 221 residues: uncharacterized protein (221 aa).

Positions 1–30 (MVPPNPAHQPARRTQPQLQPQSQPRAQPLP) are disordered. The span at 12–25 (RRTQPQLQPQSQPR) shows a compositional bias: polar residues. Residues 37-57 (VLCIIVALVLLGLLVGLAILI) traverse the membrane as a helical segment.

Its subcellular location is the membrane. This is an uncharacterized protein from Arabidopsis thaliana (Mouse-ear cress).